A 483-amino-acid polypeptide reads, in one-letter code: UDP-N-acetylmuramyl-tripeptide synthetase (483 aa).

Residue Ser-43 participates in UDP-N-acetyl-alpha-D-muramoyl-L-alanyl-D-glutamate binding. 116–122 contributes to the ATP binding site; it reads GTKGKTT. Residues 160 to 161, Ser-187, and Arg-195 each bind UDP-N-acetyl-alpha-D-muramoyl-L-alanyl-D-glutamate; that span reads TT. Position 229 is an N6-carboxylysine (Lys-229).

It belongs to the MurCDEF family. MurE subfamily. Post-translationally, carboxylation is probably crucial for Mg(2+) binding and, consequently, for the gamma-phosphate positioning of ATP.

The protein resides in the cytoplasm. It functions in the pathway cell wall biogenesis; peptidoglycan biosynthesis. Its function is as follows. Catalyzes the addition of an amino acid to the nucleotide precursor UDP-N-acetylmuramoyl-L-alanyl-D-glutamate (UMAG) in the biosynthesis of bacterial cell-wall peptidoglycan. This chain is UDP-N-acetylmuramyl-tripeptide synthetase, found in Lactococcus lactis subsp. cremoris (strain SK11).